A 278-amino-acid chain; its full sequence is Dehydrogenase/reductase SDR family member 4 (278 aa).

36 to 60 (LVTASTDGIGFAIARRLAQDGAHVV) lines the NADP(+) pocket. Lys-92 carries the N6-acetyllysine; alternate modification. Lys-92 bears the N6-succinyllysine; alternate mark. Lys-105 carries the N6-acetyllysine modification. A substrate-binding site is contributed by Ser-169. Tyr-182 serves as the catalytic Proton acceptor. Lys-186 is an NADP(+) binding site. Position 216 is an N6-acetyllysine; alternate (Lys-216). N6-succinyllysine; alternate is present on Lys-216. The residue at position 220 (Ser-220) is a Phosphoserine. An N6-succinyllysine mark is found at Lys-227 and Lys-234. The Peroxisomal targeting signal signature appears at 276–278 (SRL).

It belongs to the short-chain dehydrogenases/reductases (SDR) family. As to quaternary structure, homotetramer.

The protein resides in the peroxisome. The enzyme catalyses a secondary alcohol + NADP(+) = a ketone + NADPH + H(+). It carries out the reaction 3beta-hydroxy-5beta-pregnane-20-one + NADP(+) = 5beta-pregnan-3,20-dione + NADPH + H(+). It catalyses the reaction 5beta-dihydrotestosterone + NADPH + H(+) = 5beta-androstane-3beta,17beta-diol + NADP(+). The catalysed reaction is 5beta-androstane-3,17-dione + NADPH + H(+) = 3beta-hydroxy-5beta-androstane-17-one + NADP(+). The enzyme catalyses isatin + NADPH + H(+) = 3-hydroxyindolin-2-one + NADP(+). It carries out the reaction lithocholate + NADP(+) = 3-oxo-5beta-cholan-24-oate + NADPH + H(+). It catalyses the reaction 3-oxo-5beta-cholan-24-oate + NADPH + H(+) = isolithocholate + NADP(+). NADPH-dependent oxidoreductase which catalyzes the reduction of a variety of compounds bearing carbonyl groups including ketosteroids, alpha-dicarbonyl compounds, aldehydes, aromatic ketones and quinones. Reduces 3-ketosteroids and benzil into 3beta-hydroxysteroids and R-benzoin, respectively, in contrast to the stereoselectivity of non-primate DHRS4s which produce 3alpha-hydroxysteroids and S-benzoin. Diplays low activity toward all-trans-retinal and no activity toward 9-cis-retinal as compared to non-primate mammals. In the reverse reaction, catalyze the NAD-dependent oxidation of 3beta-hydroxysteroids and alcohol, but with much lower efficiency. Involved in the metabolism of 3beta-hydroxysteroids, isatin and xenobiotic carbonyl compounds. The chain is Dehydrogenase/reductase SDR family member 4 (DHRS4) from Pongo abelii (Sumatran orangutan).